Here is a 641-residue protein sequence, read N- to C-terminus: XK-related protein 6 (641 aa).

Disordered stretches follow at residues 20–47 and 84–120; these read LDEAVGSGGEEDGEPGGGGCGGGGDGSE and RSAAADGGDQPLQPPAAPGAGRQPPTPSAARPEPPPP. A compositionally biased stretch (gly residues) spans 34–46; sequence PGGGGCGGGGDGS. Over residues 107-120 the composition is skewed to pro residues; it reads PPTPSAARPEPPPP. The next 7 helical transmembrane spans lie at 130–150, 159–179, 318–338, 372–392, 413–433, 442–462, and 473–493; these read LWIVLALLVFFGDVGTDLWLA, YVYFGLTLFFVLVPSLLVQSL, TLPCVSSVTSLMSLAWVLASY, VISFALFASIFQLYFGIFVVV, WEEILFNMVVGIVYIFCWFNV, MFAYYTIVLTENAALTFLWYF, and AVPALCCVFISFVAGIAMMLL.

It belongs to the XK family.

It is found in the cell membrane. This chain is XK-related protein 6, found in Homo sapiens (Human).